The sequence spans 579 residues: Probable zinc metalloprotease EGY1, chloroplastic (579 aa).

Disordered regions lie at residues 1-42 (MAAA…PASA) and 78-146 (GGGG…NEPP). The transit peptide at 1-44 (MAAAAAALASSPMVHLTASRLRLPRPARSPAAATPSPSPASAAC) directs the protein to the chloroplast. Over residues 16 to 42 (LTASRLRLPRPARSPAAATPSPSPASA) the composition is skewed to low complexity. Residues 78–92 (GGGGGGGGGGGGTGG) show a composition bias toward gly residues. 2 stretches are compositionally biased toward low complexity: residues 104 to 115 (AAAAEAKVGGAV) and 125 to 137 (SGSF…SSSG). 8 helical membrane passes run 272–292 (YVIS…LGIA), 321–341 (LLPF…IQLF), 357–377 (LSIP…ITQF), 392–412 (MAGP…GLLL), 419–439 (ASDL…LGLV), 452–472 (ATVA…TTAF), 505–525 (LLGL…YVLI), and 547–567 (AALI…WDEL).

It belongs to the peptidase M50B family.

The protein resides in the plastid. It localises to the chloroplast membrane. Probable membrane-associated metalloprotease that may be involved in chloroplast development. The protein is Probable zinc metalloprotease EGY1, chloroplastic (EGY1) of Oryza sativa subsp. japonica (Rice).